The chain runs to 783 residues: ATP-dependent 6-phosphofructokinase (783 aa).

Residues 1-10 are compositionally biased toward pro residues; that stretch reads MAPPQAPVQP. The segment at 1-20 is disordered; the sequence is MAPPQAPVQPPKRRRIGVLT. The tract at residues 1-389 is N-terminal catalytic PFK domain 1; sequence MAPPQAPVQP…YHFSYINTST (389 aa). Residues G23, 86-87, and 116-119 each bind ATP; these read RC and GDGS. Position 117 (D117) interacts with Mg(2+). Substrate contacts are provided by residues 162-164, R199, 206-208, E263, R291, and 297-300; these read SID, MGR, and HTQR. The Proton acceptor role is filled by D164. Residues 390–403 form an interdomain linker region; the sequence is PDHPKLLLPENKRM. Residues 404–783 are C-terminal regulatory PFK domain 2; sequence RIGIIHVGAP…NATWSCYENA (380 aa). Residues R480, 537-541, R575, 582-584, E642, R668, 674-677, and R749 contribute to the beta-D-fructose 2,6-bisphosphate site; these read TISNN, QGG, and HFQQ.

This sequence belongs to the phosphofructokinase type A (PFKA) family. ATP-dependent PFK group I subfamily. Eukaryotic two domain clade 'E' sub-subfamily. Homotetramer. The cofactor is Mg(2+).

It localises to the cytoplasm. It carries out the reaction beta-D-fructose 6-phosphate + ATP = beta-D-fructose 1,6-bisphosphate + ADP + H(+). The protein operates within carbohydrate degradation; glycolysis; D-glyceraldehyde 3-phosphate and glycerone phosphate from D-glucose: step 3/4. Its activity is regulated as follows. Allosterically activated by ADP, AMP, or fructose 2,6-bisphosphate, and allosterically inhibited by ATP or citrate. Catalyzes the phosphorylation of D-fructose 6-phosphate to fructose 1,6-bisphosphate by ATP, the first committing step of glycolysis. The protein is ATP-dependent 6-phosphofructokinase (pfkA) of Aspergillus niger.